A 270-amino-acid polypeptide reads, in one-letter code: Small ribosomal subunit protein eS1 (270 aa).

Disordered regions lie at residues M1 to V21 and G238 to V270.

The protein belongs to the eukaryotic ribosomal protein eS1 family. Component of the small ribosomal subunit. Mature ribosomes consist of a small (40S) and a large (60S) subunit. The 40S subunit contains about 33 different proteins and 1 molecule of RNA (18S). The 60S subunit contains about 49 different proteins and 3 molecules of RNA (28S, 5.8S and 5S).

It is found in the cytoplasm. This Aedes aegypti (Yellowfever mosquito) protein is Small ribosomal subunit protein eS1.